Consider the following 158-residue polypeptide: 2-C-methyl-D-erythritol 2,4-cyclodiphosphate synthase (158 aa).

A divalent metal cation contacts are provided by Asp9 and His11. 4-CDP-2-C-methyl-D-erythritol 2-phosphate contacts are provided by residues 9 to 11 (DVH) and 35 to 36 (HS). His43 lines the a divalent metal cation pocket. 4-CDP-2-C-methyl-D-erythritol 2-phosphate is bound by residues 57-59 (DIG), 62-66 (FPDTD), 101-107 (AQKPKMA), 133-136 (TTTE), Phe140, and Arg143.

Belongs to the IspF family. Homotrimer. The cofactor is a divalent metal cation.

It catalyses the reaction 4-CDP-2-C-methyl-D-erythritol 2-phosphate = 2-C-methyl-D-erythritol 2,4-cyclic diphosphate + CMP. It participates in isoprenoid biosynthesis; isopentenyl diphosphate biosynthesis via DXP pathway; isopentenyl diphosphate from 1-deoxy-D-xylulose 5-phosphate: step 4/6. Functionally, involved in the biosynthesis of isopentenyl diphosphate (IPP) and dimethylallyl diphosphate (DMAPP), two major building blocks of isoprenoid compounds. Catalyzes the conversion of 4-diphosphocytidyl-2-C-methyl-D-erythritol 2-phosphate (CDP-ME2P) to 2-C-methyl-D-erythritol 2,4-cyclodiphosphate (ME-CPP) with a corresponding release of cytidine 5-monophosphate (CMP). The sequence is that of 2-C-methyl-D-erythritol 2,4-cyclodiphosphate synthase from Bacillus cytotoxicus (strain DSM 22905 / CIP 110041 / 391-98 / NVH 391-98).